Consider the following 334-residue polypeptide: Flavonol synthase/flavanone 3-hydroxylase (334 aa).

Residues 196–295 (DLVYLMKINY…RMSWPVFLEP (100 aa)) enclose the Fe2OG dioxygenase domain. Fe cation is bound by residues H220, D222, and H276.

It belongs to the iron/ascorbate-dependent oxidoreductase family. Requires Fe cation as cofactor. The cofactor is L-ascorbate.

The protein localises to the cytoplasm. The catalysed reaction is a (2R,3R)-dihydroflavonol + 2-oxoglutarate + O2 = a flavonol + succinate + CO2 + H2O. The enzyme catalyses a (2S)-flavan-4-one + 2-oxoglutarate + O2 = a (2R,3R)-dihydroflavonol + succinate + CO2. It participates in secondary metabolite biosynthesis; flavonoid biosynthesis. In terms of biological role, catalyzes the formation of flavonols from dihydroflavonols. It can act on dihydrokaempferol to produce kaempferol, on dihydroquercetin to produce quercitin and on dihydromyricetin to produce myricetin. This chain is Flavonol synthase/flavanone 3-hydroxylase (FLS), found in Eustoma exaltatum subsp. russellianum (Bluebells).